A 489-amino-acid chain; its full sequence is Lysine--tRNA ligase (489 aa).

Positions 399 and 406 each coordinate Mg(2+).

It belongs to the class-II aminoacyl-tRNA synthetase family. In terms of assembly, homodimer. Requires Mg(2+) as cofactor.

The protein localises to the cytoplasm. It catalyses the reaction tRNA(Lys) + L-lysine + ATP = L-lysyl-tRNA(Lys) + AMP + diphosphate. In Roseiflexus sp. (strain RS-1), this protein is Lysine--tRNA ligase.